The chain runs to 372 residues: Hydrogenase-2 small chain (372 aa).

The segment at residues 1-37 (MTGDNTLIHSHGINRRDFMKLCAALAATMGLSSKAAA) is a signal peptide (tat-type signal). Residues Cys-59, Cys-62, Cys-157, Cys-191, His-229, Cys-232, Cys-257, and Cys-263 each coordinate [4Fe-4S] cluster. The [3Fe-4S] cluster site is built by Cys-272, Cys-292, and Cys-295.

It belongs to the [NiFe]/[NiFeSe] hydrogenase small subunit family. Heterodimer of a large and a small subunit. Requires [4Fe-4S] cluster as cofactor. The cofactor is [3Fe-4S] cluster. Post-translationally, predicted to be exported by the Tat system. The position of the signal peptide cleavage has not been experimentally proven.

The protein resides in the cell membrane. It localises to the periplasm. It carries out the reaction H2 + A = AH2. Its function is as follows. This is one of three E.coli hydrogenases synthesized in response to different physiological conditions. HYD2 is involved in hydrogen uptake. This chain is Hydrogenase-2 small chain (hybO), found in Escherichia coli O157:H7.